Consider the following 442-residue polypeptide: 26S proteasome regulatory subunit 6A (442 aa).

At Ser12 the chain carries Phosphoserine. 230–237 contributes to the ATP binding site; the sequence is GPPGTGKT. Ser379 is modified (phosphoserine).

It belongs to the AAA ATPase family. In terms of assembly, component of the 19S proteasome regulatory particle complex. The 26S proteasome consists of a 20S core particle (CP) and two 19S regulatory subunits (RP). The regulatory particle is made of a lid composed of 9 subunits, a base containing 6 ATPases including PSMC3 and few additional components. Interacts with PAAF1.

Its subcellular location is the cytoplasm. The protein localises to the nucleus. Its function is as follows. Component of the 26S proteasome, a multiprotein complex involved in the ATP-dependent degradation of ubiquitinated proteins. This complex plays a key role in the maintenance of protein homeostasis by removing misfolded or damaged proteins, which could impair cellular functions, and by removing proteins whose functions are no longer required. Therefore, the proteasome participates in numerous cellular processes, including cell cycle progression, apoptosis, or DNA damage repair. PSMC3 belongs to the heterohexameric ring of AAA (ATPases associated with diverse cellular activities) proteins that unfolds ubiquitinated target proteins that are concurrently translocated into a proteolytic chamber and degraded into peptides. This is 26S proteasome regulatory subunit 6A (Psmc3) from Mus musculus (Mouse).